Here is a 254-residue protein sequence, read N- to C-terminus: Isoprenyl transferase (254 aa).

Residue Asp-34 is part of the active site. Position 34 (Asp-34) interacts with Mg(2+). Residues 35-38 (GNGR), Trp-39, Arg-47, His-51, and 79-81 (STE) contribute to the substrate site. Asn-82 functions as the Proton acceptor in the catalytic mechanism. Substrate contacts are provided by residues Trp-83, Arg-85, Arg-202, and 208 to 210 (RIS). Glu-221 is a binding site for Mg(2+).

The protein belongs to the UPP synthase family. Homodimer. It depends on Mg(2+) as a cofactor.

Catalyzes the condensation of isopentenyl diphosphate (IPP) with allylic pyrophosphates generating different type of terpenoids. The polypeptide is Isoprenyl transferase (Staphylococcus saprophyticus subsp. saprophyticus (strain ATCC 15305 / DSM 20229 / NCIMB 8711 / NCTC 7292 / S-41)).